The chain runs to 424 residues: Probable ribonuclease FAU-1 (424 aa).

The protein belongs to the FAU-1 family.

In terms of biological role, probable RNase involved in rRNA stability through maturation and/or degradation of precursor rRNAs. Binds to RNA in loop regions with AU-rich sequences. The polypeptide is Probable ribonuclease FAU-1 (Saccharolobus islandicus (strain L.S.2.15 / Lassen #1) (Sulfolobus islandicus)).